The primary structure comprises 168 residues: Ubiquitin-conjugating enzyme E2 7 (168 aa).

The tract at residues 1–21 (MATAPARRASSSRSSSEISRT) is disordered. Positions 6–166 (ARRASSSRSS…VRRAVRKSQE (161 aa)) constitute a UBC core domain. C92 (glycyl thioester intermediate) is an active-site residue.

The protein belongs to the ubiquitin-conjugating enzyme family.

The catalysed reaction is S-ubiquitinyl-[E1 ubiquitin-activating enzyme]-L-cysteine + [E2 ubiquitin-conjugating enzyme]-L-cysteine = [E1 ubiquitin-activating enzyme]-L-cysteine + S-ubiquitinyl-[E2 ubiquitin-conjugating enzyme]-L-cysteine.. It participates in protein modification; protein ubiquitination. In terms of biological role, catalyzes the covalent attachment of ubiquitin to other proteins so as to signal them for selective protein degradation. Involved in the formation of multiubiquitin chains. In Triticum aestivum (Wheat), this protein is Ubiquitin-conjugating enzyme E2 7 (UBC7).